The chain runs to 377 residues: Succinyl-diaminopimelate desuccinylase (377 aa).

A Zn(2+)-binding site is contributed by His67. Asp69 is an active-site residue. Zn(2+) is bound at residue Asp100. The Proton acceptor role is filled by Glu134. Zn(2+) contacts are provided by Glu135, Glu163, and His349.

This sequence belongs to the peptidase M20A family. DapE subfamily. In terms of assembly, homodimer. Zn(2+) serves as cofactor. The cofactor is Co(2+).

The enzyme catalyses N-succinyl-(2S,6S)-2,6-diaminopimelate + H2O = (2S,6S)-2,6-diaminopimelate + succinate. It participates in amino-acid biosynthesis; L-lysine biosynthesis via DAP pathway; LL-2,6-diaminopimelate from (S)-tetrahydrodipicolinate (succinylase route): step 3/3. Its function is as follows. Catalyzes the hydrolysis of N-succinyl-L,L-diaminopimelic acid (SDAP), forming succinate and LL-2,6-diaminopimelate (DAP), an intermediate involved in the bacterial biosynthesis of lysine and meso-diaminopimelic acid, an essential component of bacterial cell walls. The polypeptide is Succinyl-diaminopimelate desuccinylase (Actinobacillus pleuropneumoniae serotype 5b (strain L20)).